The primary structure comprises 379 residues: Flagellar P-ring protein (379 aa).

An N-terminal signal peptide occupies residues 1-32; the sequence is MTAPAGFLPRVGRLIAVALTAVFLLAPTGAEA.

This sequence belongs to the FlgI family. In terms of assembly, the basal body constitutes a major portion of the flagellar organelle and consists of four rings (L,P,S, and M) mounted on a central rod.

Its subcellular location is the periplasm. The protein resides in the bacterial flagellum basal body. In terms of biological role, assembles around the rod to form the L-ring and probably protects the motor/basal body from shearing forces during rotation. The chain is Flagellar P-ring protein from Rhodospirillum rubrum (strain ATCC 11170 / ATH 1.1.1 / DSM 467 / LMG 4362 / NCIMB 8255 / S1).